A 908-amino-acid chain; its full sequence is Metabotropic glutamate receptor 8 (908 aa).

The signal sequence occupies residues 1-33 (MVCEGKRSASCPCFFLLTAKFYWILTMMQRTHS). Residues 34 to 583 (QEYAHSIRVD…IIKLEWHSPW (550 aa)) lie on the Extracellular side of the membrane. A disulfide bridge connects residues Cys-64 and Cys-106. N-linked (GlcNAc...) asparagine glycosylation is present at Asn-95. L-glutamate is bound by residues Ser-156, 177 to 179 (AST), and Tyr-227. 7 cysteine pairs are disulfide-bonded: Cys-246/Cys-534, Cys-369/Cys-384, Cys-424/Cys-431, Cys-516/Cys-535, Cys-520/Cys-538, Cys-541/Cys-553, and Cys-556/Cys-569. Asn-298 carries an N-linked (GlcNAc...) asparagine glycan. An L-glutamate-binding site is contributed by Asp-309. Position 401 (Lys-401) interacts with L-glutamate. N-linked (GlcNAc...) asparagine glycosylation is found at Asn-452 and Asn-480. A glycan (N-linked (GlcNAc...) asparagine) is linked at Asn-565. Residues 584–608 (AVVPVFVAILGIIATTFVIVTFVRY) form a helical membrane-spanning segment. The Cytoplasmic portion of the chain corresponds to 609 to 620 (NDTPIVRASGRE). A helical membrane pass occupies residues 621 to 641 (LSYVLLTGIFLCYSITFLMIA). Topologically, residues 642–647 (APDTII) are extracellular. The helical transmembrane segment at 648–668 (CSFRRVFLGLGMCFSYAALLT) threads the bilayer. Topologically, residues 669–695 (KTNRIHRIFEQGKKSVTAPKFISPASQ) are cytoplasmic. Residues 696 to 716 (LVITFSLISVQLLGVFVWFVV) traverse the membrane as a helical segment. Residues 717–746 (DPPHIIIDYGEQRTLDPEKARGVLKCDISD) lie on the Extracellular side of the membrane. A helical membrane pass occupies residues 747–768 (LSLICSLGYSILLMVTCTVYAI). Over 769 to 781 (KTRGVPETFNEAK) the chain is Cytoplasmic. A helical transmembrane segment spans residues 782–803 (PIGFTMYTTCIIWLAFIPIFFG). At 804-818 (TAQSAEKMYIQTTTL) the chain is on the extracellular side. Residues 819–843 (TVSMSLSASVSLGMLYMPKVYIIIF) traverse the membrane as a helical segment. The Cytoplasmic segment spans residues 844–908 (HPEQNVQKRK…TYISYSNHSI (65 aa)). Lys-882 is covalently cross-linked (Glycyl lysine isopeptide (Lys-Gly) (interchain with G-Cter in SUMO1)).

It belongs to the G-protein coupled receptor 3 family. As to quaternary structure, interacts with PICK1.

Its subcellular location is the cell membrane. G-protein coupled receptor for glutamate. Ligand binding causes a conformation change that triggers signaling via guanine nucleotide-binding proteins (G proteins) and modulates the activity of down-stream effectors, such as adenylate cyclase. Signaling inhibits adenylate cyclase activity. The polypeptide is Metabotropic glutamate receptor 8 (GRM8) (Homo sapiens (Human)).